A 342-amino-acid polypeptide reads, in one-letter code: Ribosomal RNA small subunit methyltransferase C (342 aa).

Belongs to the methyltransferase superfamily. RsmC family. Monomer.

It localises to the cytoplasm. It carries out the reaction guanosine(1207) in 16S rRNA + S-adenosyl-L-methionine = N(2)-methylguanosine(1207) in 16S rRNA + S-adenosyl-L-homocysteine + H(+). Its function is as follows. Specifically methylates the guanine in position 1207 of 16S rRNA in the 30S particle. The protein is Ribosomal RNA small subunit methyltransferase C of Salmonella gallinarum (strain 287/91 / NCTC 13346).